The sequence spans 753 residues: Elongin-A2 (753 aa).

In terms of domain architecture, TFIIS N-terminal spans 5 to 80; sequence STTLHAVEKL…ARWKKLVLVD (76 aa). 3 disordered regions span residues 80 to 245, 261 to 453, and 477 to 497; these read DRNT…DWHS, ETPR…GPKT, and LSDS…SPKF. Composition is skewed to basic and acidic residues over residues 147 to 157 and 271 to 285; these read HSREPRAERKC and ARDR…DKEG. Residues 306-317 are compositionally biased toward basic residues; it reads KRPQHSHSNKKR. A compositionally biased stretch (basic and acidic residues) spans 333–348; it reads SPEEKEQLSNDRETQE. The segment covering 366-377 has biased composition (acidic residues); sequence EVEEVDMAEEFE. A compositionally biased stretch (basic and acidic residues) spans 409–428; it reads DKQRKANESKGTRESWDSAK. Residues 500 to 659 form an activation domain region; the sequence is EAAFPGRRVN…TPYDTSRRQE (160 aa). Residues 528–537 are BC-box; it reads TLRQQCAQVL. Positions 528–537 are interacting with Elongin BC complex; sequence TLRQQCAQVL. Residues 650-735 are disordered; that stretch reads TPYDTSRRQE…KTRKQAAKKV (86 aa). Basic and acidic residues predominate over residues 654 to 663; sequence TSRRQEKSAG. Low complexity predominate over residues 680-700; the sequence is GSSHTPSSQSSSGGGRDSSSS.

Heterotrimer of an A (ELOA, ELOA2 or ELOA3P), ELOB and ELOC subunit. Specifically expressed in testis.

It is found in the nucleus. In terms of biological role, SIII, also known as elongin, is a general transcription elongation factor that increases the RNA polymerase II transcription elongation past template-encoded arresting sites. Subunit A2 is transcriptionally active but its transcription activity is not enhanced by binding to the dimeric complex of the SIII regulatory subunits B and C (elongin BC complex). The polypeptide is Elongin-A2 (Homo sapiens (Human)).